A 579-amino-acid chain; its full sequence is Laccase-4 (579 aa).

The signal sequence occupies residues 1-28; sequence MTMAISSALPSPLLLAASLLLLIVQAQG. Plastocyanin-like domains are found at residues 36-152 and 162-316; these read NVQM…PKLG and KEVP…YENP. N-linked (GlcNAc...) asparagine glycans are attached at residues Asn-41 and Asn-82. Cu cation contacts are provided by His-86 and His-88. Asn-118 is a glycosylation site (N-linked (GlcNAc...) asparagine). His-131 and His-133 together coordinate Cu cation. Residues Asn-191, Asn-207, Asn-243, Asn-304, Asn-340, Asn-347, Asn-386, Asn-393, Asn-403, Asn-439, Asn-446, and Asn-462 are each glycosylated (N-linked (GlcNAc...) asparagine). The Plastocyanin-like 3 domain maps to 429–563; that stretch reads DFPVAPLSPF…RMAWLVLDGS (135 aa). Cu cation is bound by residues His-480, His-483, His-485, His-542, Cys-543, His-544, and His-548.

It belongs to the multicopper oxidase family. Requires Cu cation as cofactor.

It is found in the secreted. The protein resides in the extracellular space. It localises to the apoplast. The catalysed reaction is 4 hydroquinone + O2 = 4 benzosemiquinone + 2 H2O. In terms of biological role, lignin degradation and detoxification of lignin-derived products. This is Laccase-4 (LAC4) from Oryza sativa subsp. japonica (Rice).